Reading from the N-terminus, the 146-residue chain is Anti-sigma F factor (146 aa).

It belongs to the anti-sigma-factor family.

It catalyses the reaction L-seryl-[protein] + ATP = O-phospho-L-seryl-[protein] + ADP + H(+). The enzyme catalyses L-threonyl-[protein] + ATP = O-phospho-L-threonyl-[protein] + ADP + H(+). In terms of biological role, binds to sigma F and blocks its ability to form an RNA polymerase holoenzyme (E-sigma F). Phosphorylates SpoIIAA on a serine residue. This phosphorylation may enable SpoIIAA to act as an anti-anti-sigma factor that counteracts SpoIIAB and thus releases sigma F from inhibition. This Geobacillus stearothermophilus (Bacillus stearothermophilus) protein is Anti-sigma F factor.